A 306-amino-acid polypeptide reads, in one-letter code: Reaction center protein M chain (306 aa).

Helical transmembrane passes span 53–79, 111–140, and 143–168; these read GTTG…ASVN, GGWW…RALK, and THTA…LLMG. (7R,8Z)-bacteriochlorophyll b-binding residues include His-181 and His-201. Residues 198-226 form a helical membrane-spanning segment; that stretch reads NPFHMLSIAFLYGSALLSAMHGATILAVS. Fe cation-binding residues include His-218 and Glu-233. Residue Trp-251 coordinates a ubiquinone. Residues 260-286 traverse the membrane as a helical segment; sequence TMESIHRWAWWFAVLCTFTGAIGILLT. Residue His-265 coordinates Fe cation.

Belongs to the reaction center PufL/M/PsbA/D family. As to quaternary structure, reaction center is composed of four bacteriochlorophylls, two bacteriopheophytins, two ubiquinones, one iron, and three highly hydrophobic polypeptide chains (designated L, M, and H).

The protein localises to the cellular chromatophore membrane. In terms of biological role, the reaction center is a membrane-bound complex that mediates the initial photochemical event in the electron transfer process of photosynthesis. In Rhodospirillum rubrum, this protein is Reaction center protein M chain (pufM).